We begin with the raw amino-acid sequence, 469 residues long: GTPase Der (469 aa).

EngA-type G domains lie at 3–166 and 177–350; these read PVIA…PEDE and LRLA…ESAN. GTP-binding positions include 9–16, 56–60, 118–121, 183–190, 230–234, and 295–298; these read GRPNVGKS, DTGGI, NKVD, DTAGV, and NKWD. In terms of domain architecture, KH-like spans 351–435; that stretch reads LKVSPAKLTQ…PVKIEFKTSE (85 aa).

It belongs to the TRAFAC class TrmE-Era-EngA-EngB-Septin-like GTPase superfamily. EngA (Der) GTPase family. Associates with the 50S ribosomal subunit.

GTPase that plays an essential role in the late steps of ribosome biogenesis. This Acinetobacter baumannii (strain AB0057) protein is GTPase Der.